We begin with the raw amino-acid sequence, 519 residues long: MIILYIILAIIAIVVGYCAGFFMHKRLIEKQTANASNSADVIVENARKQAETERREKLLEAKDESHRYRAKVEKELKERRAELQKQEDRLLQREDSLDRKDNSFEKRENSLERKEQKLALDQKHIDEQQQKASSLVEERQQELERVSNLTQEDAKNLIISETEAKLEKERALIIKEGLEDAEAEADQTARKLIAEAIQRSAADMASETTITVVSLPNDDMKGRIIGREGRNIRNFQNVTGVDLIIDDTPEAVVLSSFDPIRREIARIALDKLIQDGRIHPARIEEMVEKAKKEMDDNIRKTGEQAVFDLGIHSMNPELIKLIGQLKYRTSYGQNVLNHSIEVANLAGVLAAELGEDVTVAKRAGLLHDIGKAVQHETDTSHAQLGVELAKKYKESATVINAIAAHHDGVEAQHVISVLVAAANSISAARPGARSDTLQSYIHRLEKLEQISNNFDGVKKSYAIQAGREVRVIVKPNKINDLKAVMLTHNIRKAIEKELEYAGKVKVTVVREVRAVDYAK.

The chain crosses the membrane as a helical span at residues 2–22; the sequence is IILYIILAIIAIVVGYCAGFF. The segment at 84-113 is disordered; the sequence is QKQEDRLLQREDSLDRKDNSFEKRENSLER. The 86-residue stretch at 209–294 folds into the KH domain; sequence TITVVSLPND…EMVEKAKKEM (86 aa). The HD domain occupies 335–428; the sequence is VLNHSIEVAN…VAAANSISAA (94 aa).

Belongs to the RNase Y family.

Its subcellular location is the cell membrane. Functionally, endoribonuclease that initiates mRNA decay. In Pediococcus pentosaceus (strain ATCC 25745 / CCUG 21536 / LMG 10740 / 183-1w), this protein is Ribonuclease Y 1.